The chain runs to 84 residues: Delta-thalatoxin-Tas1a (84 aa).

A signal peptide spans 1-19 (MAYLKIVLVALMLVLAVSA). The propeptide occupies 20 to 33 (MRRPDQQDQDISVA). Cystine bridges form between cysteine 38-cysteine 78, cysteine 40-cysteine 68, and cysteine 61-cysteine 79.

It belongs to the sea anemone sodium channel inhibitory toxin family. Type II subfamily.

The protein localises to the secreted. It is found in the nematocyst. In terms of biological role, binds specifically to the voltage-gated sodium channel (Nav) and delays its inactivation. The chain is Delta-thalatoxin-Tas1a from Thalassianthus aster (Fuzzy-tipped anemone).